The sequence spans 467 residues: 26S proteasome regulatory subunit 7 homolog (467 aa).

Disordered regions lie at residues 1–26 (MPPK…DDKI) and 108–140 (GNGE…DEDD). Over residues 117–134 (TDNNNSGNSNSNSNQQST) the composition is skewed to low complexity. 2 positions are modified to phosphoserine: S164 and S231. ATP is bound at residue 250 to 257 (GPPGTGKT).

This sequence belongs to the AAA ATPase family. As to quaternary structure, interacts with UBR1 and CIC1. Post-translationally, the N-terminus is blocked.

The protein resides in the cytoplasm. The protein localises to the nucleus. The 26S proteasome is involved in the ATP-dependent degradation of ubiquitinated proteins. The regulatory (or ATPase) complex confers ATP dependency and substrate specificity to the 26S complex. This Saccharomyces cerevisiae (strain ATCC 204508 / S288c) (Baker's yeast) protein is 26S proteasome regulatory subunit 7 homolog (RPT1).